We begin with the raw amino-acid sequence, 418 residues long: Nucleoside permease NupG (418 aa).

Residues 1-4 lie on the Cytoplasmic side of the membrane; that stretch reads MNLK. A helical membrane pass occupies residues 5–29; sequence LQLKILSFLQFCLWGSWLTTLGSYM. Over 30 to 36 the chain is Periplasmic; that stretch reads FVTLKFD. The chain crosses the membrane as a helical span at residues 37–58; that stretch reads GASIGAVYSSLGIAAVFMPALL. Over 59–67 the chain is Cytoplasmic; sequence GIVADKWLS. The helical transmembrane segment at 68–88 threads the bilayer; sequence AKWVYAICHTIGAITLFMAAQ. Residues 89–91 lie on the Periplasmic side of the membrane; it reads VTT. A helical membrane pass occupies residues 92–113; the sequence is PEAMFLVILINSFAYMPTLGLI. Topologically, residues 114–135 are cytoplasmic; sequence NTISYYRLQNAGMDIVTDFPPI. The chain crosses the membrane as a helical span at residues 136–156; sequence RIWGTIGFIMAMWVVSLSGFE. At 157–158 the chain is on the periplasmic side; it reads LS. A helical membrane pass occupies residues 159 to 178; that stretch reads HMQLYIGAALSAILVLFTLT. The Cytoplasmic portion of the chain corresponds to 179–209; sequence LPHIPVAKQQANQSWTTLLGLDAFALFKNKR. A helical transmembrane segment spans residues 210–236; sequence MAIFFIFSMLLGAELQITNMFGNTFLH. The Periplasmic portion of the chain corresponds to 237-247; it reads SFDKDPMFASS. A helical transmembrane segment spans residues 248-268; that stretch reads FIVQHASIIMSISQISETLFI. Residues 269–280 lie on the Cytoplasmic side of the membrane; that stretch reads LTIPFFLSRYGI. A helical transmembrane segment spans residues 281 to 300; sequence KNVMMISIVAWILRFALFAY. Residues 301 to 305 lie on the Periplasmic side of the membrane; it reads GDPTP. The chain crosses the membrane as a helical span at residues 306-326; that stretch reads FGTVLLVLSMIVYGCAFDFFN. Over 327–346 the chain is Cytoplasmic; that stretch reads ISGSVFVEKEVSPAIRASAQ. A helical transmembrane segment spans residues 347-369; the sequence is GMFLMMTNGFGCILGGIVSGKVV. At 370–379 the chain is on the periplasmic side; that stretch reads EMYTQNGITD. A helical membrane pass occupies residues 380–403; the sequence is WQTVWLIFAGYSVVLAFAFMAMFK. The Cytoplasmic segment spans residues 404-418; the sequence is YKHVRVPTGTQTVSH.

The protein belongs to the major facilitator superfamily. Nucleoside:H(+) symporter (NHS) (TC 2.A.1.10) family.

The protein localises to the cell inner membrane. The enzyme catalyses adenosine(in) + H(+)(in) = adenosine(out) + H(+)(out). It carries out the reaction uridine(in) + H(+)(in) = uridine(out) + H(+)(out). It catalyses the reaction thymidine(in) + H(+)(in) = thymidine(out) + H(+)(out). The catalysed reaction is cytidine(in) + H(+)(in) = cytidine(out) + H(+)(out). The enzyme catalyses 2'-deoxycytidine(in) + H(+)(in) = 2'-deoxycytidine(out) + H(+)(out). It carries out the reaction guanosine(in) + H(+)(in) = guanosine(out) + H(+)(out). It catalyses the reaction inosine(in) + H(+)(in) = inosine(out) + H(+)(out). Its activity is regulated as follows. Inhibited by the protonophore uncouplers 2,4-dinitrophenol and carbonyl cyanide m-chlorophenylhydrazone (CCCP), and by valinomycin. Inhibited by the nucleoside antibiotic showdomycin. Functionally, broad-specificity transporter of purine and pyrimidine nucleosides. Can transport adenosine, uridine, thymidine, cytidine, deoxycytidine, guanosine and inosine. Can also transport xanthosine, but with a very low affinity. Transport is driven by a proton motive force. The chain is Nucleoside permease NupG from Escherichia coli (strain K12).